The chain runs to 428 residues: Methyl-branched lipid omega-hydroxylase (428 aa).

Cysteine 379 provides a ligand contact to heme.

It belongs to the cytochrome P450 family. It depends on heme as a cofactor.

It catalyses the reaction a methyl-branched lipid + O2 + 2 reduced ferredoxin [iron-sulfur] cluster + 2 H(+) = an omega-hydroxy-methyl-branched lipid + H2O + 2 oxidized ferredoxin [iron-sulfur] cluster.. It carries out the reaction cholest-4-en-3-one + 6 reduced [2Fe-2S]-[ferredoxin] + 3 O2 + 5 H(+) = (25R)-3-oxocholest-4-en-26-oate + 6 oxidized [2Fe-2S]-[ferredoxin] + 4 H2O. The protein operates within lipid metabolism; branched-chain fatty acid metabolism. Its function is as follows. Primarily hydroxylates the omega-carbon of a number of methyl-branched lipids, including (2E,6E)-farnesol, phytanate, geranylgeraniol, 15-methylpalmitate and (2E,6E)-farnesyl diphosphate. Also catalyzes the sequential oxidation of the terminal methyl of cholest-4-en-3-one into (25R)-26-hydroxycholest-4-en-3-one (alcohol), (25R)-26-oxocholest-4-en-3-one (aldehyde), to finally yield the carboxylic acid (25R)-3-oxocholest-4-en-26-oate. Also able to sequentially oxidize cholesterol itself, not only cholest-4-en-3-one. This is Methyl-branched lipid omega-hydroxylase (cyp124) from Mycobacterium bovis (strain ATCC BAA-935 / AF2122/97).